Here is a 450-residue protein sequence, read N- to C-terminus: tRNA modification GTPase MnmE (450 aa).

The (6S)-5-formyl-5,6,7,8-tetrahydrofolate site is built by Arg-25, Glu-86, and Arg-126. The TrmE-type G domain maps to 221–373 (GLRVALVGRP…LVQALLERCG (153 aa)). Asn-231 contacts K(+). Residues 231 to 236 (NVGKSS), 250 to 256 (TDLPGTT), 275 to 278 (DTAG), and 336 to 339 (NKAD) contribute to the GTP site. A Mg(2+)-binding site is contributed by Ser-235. Residues Thr-250, Leu-252, and Thr-255 each contribute to the K(+) site. Residue Thr-256 participates in Mg(2+) binding. Lys-450 contacts (6S)-5-formyl-5,6,7,8-tetrahydrofolate.

It belongs to the TRAFAC class TrmE-Era-EngA-EngB-Septin-like GTPase superfamily. TrmE GTPase family. As to quaternary structure, homodimer. Heterotetramer of two MnmE and two MnmG subunits. K(+) serves as cofactor.

Its subcellular location is the cytoplasm. Exhibits a very high intrinsic GTPase hydrolysis rate. Involved in the addition of a carboxymethylaminomethyl (cmnm) group at the wobble position (U34) of certain tRNAs, forming tRNA-cmnm(5)s(2)U34. The polypeptide is tRNA modification GTPase MnmE (Synechococcus sp. (strain CC9605)).